The following is a 545-amino-acid chain: E3 ubiquitin-protein ligase ipaH9.8 (545 aa).

The tract at residues 1 to 242 (MLPINNNFSL…YHGPRIYFSM (242 aa)) is interaction with target proteins. LRR repeat units follow at residues 57 to 77 (NSDE…NLPA), 78 to 99 (QITL…PVTL), 100 to 117 (KKLY…VLPP), 118 to 139 (ALES…PDSL), 140 to 157 (LTMN…SLPQ), 158 to 179 (ALKN…SEGN), 182 to 203 (VVRE…ILNL), and 205 to 228 (NECS…QRLT). The tract at residues 243–250 (SDGQQNTL) is linker. The E3 ubiquitin-protein ligase catalytic domain stretch occupies residues 251 to 545 (HRPLADAVTA…SENGSQLHHS (295 aa)). The NEL domain maps to 253 to 545 (PLADAVTAWF…SENGSQLHHS (293 aa)). Cys337 acts as the Glycyl thioester intermediate in catalysis.

It belongs to the LRR-containing bacterial E3 ligase family. Also interacts with human and mouse U2AF1 (U2AF35). Ubiquitinated in the presence of host E1 ubiquitin-activating enzyme, E2 ubiquitin-conjugating enzyme and ubiquitin.

It is found in the secreted. Its subcellular location is the host cytoplasm. The protein localises to the host nucleus. The enzyme catalyses S-ubiquitinyl-[E2 ubiquitin-conjugating enzyme]-L-cysteine + [acceptor protein]-L-lysine = [E2 ubiquitin-conjugating enzyme]-L-cysteine + N(6)-ubiquitinyl-[acceptor protein]-L-lysine.. Its activity is regulated as follows. Exists in an autoinhibited state in the absence of substrate protein, due to interactions of the leucine-rich repeats with NEL domain. Is activated upon binding to a substrate protein. Functionally, effector E3 ubiquitin ligase that interferes with host's ubiquitination pathway and modulates the acute inflammatory responses, thus facilitating bacterial colonization within the host cell. Interacts with IKBKG (NEMO) and TNIP1 (ABIN-1), a ubiquitin-binding adapter protein, which results in TNIP1-dependent 'Lys-27'-linked polyubiquitination of IKBKG. Consequently, polyubiquitinated IKBKG undergoes proteasome-dependent degradation, which perturbs NF-kappa-B activation during bacterial infection. Mediates polyubiquitination of host U2AF1, leading to its proteasomal degradation. Catalyzes 'Lys-48'-linked polyubiquitination and subsequent degradation of a subset of host guanylate-binding proteins (GBP1, GBP2, GBP4 and GBP6), thereby suppressing host cell defense. In contrast, host GBP3 and GBP7 are not ubiquitinated by IpaH9.8. Uses UBE2D2 (UBCH5B) as an E2 ubiquitin-conjugating enzyme. This chain is E3 ubiquitin-protein ligase ipaH9.8 (ipaH9.8), found in Shigella sonnei (strain Ss046).